The sequence spans 154 residues: Anti-sigma-E factor RseA (154 aa).

The residue at position 39 (Thr-39) is a Phosphothreonine; by PknB. The Zn(2+) site is built by His-66, Cys-70, and Cys-73. Residues 104–154 (SEIPRCPPEGPSKGSSGGSSQGPPDGAAAGFGDRFADGDGGNRGRQSRVRR) form a disordered region. Residues 124–136 (QGPPDGAAAGFGD) show a composition bias toward low complexity.

Belongs to the zinc-associated anti-sigma factor (ZAS) superfamily. Interacts with cognate ECF RNA polymerase sigma factor SigE under reducing conditions; this inhibits the interaction of SigE with the RNA polymerase catalytic core. Zn(2+) is required as a cofactor. Post-translationally, phosphorylated by PknB on Thr-39; can be dephosphorylated (at least in vitro) by PstP. Phosphorylation is the signal for subsequent degradation by the ClpC1-ClpP2 complex. In terms of processing, degraded following vancomycin treatment (surface stress) by a ClpC1-ClpP2 complex.

It localises to the cytoplasm. Its function is as follows. An anti-sigma factor for extracytoplasmic function (ECF) sigma factor SigE. ECF sigma factors are held in an inactive form by an anti-sigma factor. The sequence is that of Anti-sigma-E factor RseA (rseA) from Mycobacterium tuberculosis (strain ATCC 25618 / H37Rv).